Here is a 311-residue protein sequence, read N- to C-terminus: Malate dehydrogenase (311 aa).

NAD(+) contacts are provided by residues 7 to 13 (GAAGGIG) and Asp34. Residues Arg81 and Arg87 each contribute to the substrate site. NAD(+) contacts are provided by residues Asn94 and 117 to 119 (ITN). 2 residues coordinate substrate: Asn119 and Arg153. The active-site Proton acceptor is the His177. Met227 is an NAD(+) binding site.

The protein belongs to the LDH/MDH superfamily. MDH type 1 family. In terms of assembly, homodimer.

It carries out the reaction (S)-malate + NAD(+) = oxaloacetate + NADH + H(+). Its function is as follows. Catalyzes the reversible oxidation of malate to oxaloacetate. The polypeptide is Malate dehydrogenase (Aeromonas hydrophila subsp. hydrophila (strain ATCC 7966 / DSM 30187 / BCRC 13018 / CCUG 14551 / JCM 1027 / KCTC 2358 / NCIMB 9240 / NCTC 8049)).